The chain runs to 268 residues: Eukaryotic translation initiation factor 2 subunit beta (268 aa).

Residues 1–12 show a composition bias toward basic and acidic residues; that stretch reads MADEINEIREEQ. Residues 1–85 form a disordered region; sequence MADEINEIRE…LNNESVDAGE (85 aa). An N-acetylalanine modification is found at A2. S42, S80, and S112 each carry phosphoserine; by CK2. The segment at 222-246 adopts a C4-type zinc-finger fold; it reads CLGCKSPDTILSKENRLFFLRCEKC.

It belongs to the eIF-2-beta/eIF-5 family. Eukaryotic translation initiation factor 2 eIF2 is a heterotrimeric complex composed of an alpha, a beta and a gamma subunit. Phosphorylated at Ser-42, Ser-80 and Ser-112 by CK2.

It localises to the cytoplasm. It is found in the cytosol. Component of the eIF2 complex that functions in the early steps of protein synthesis by forming a ternary complex with GTP and initiator tRNA. This complex binds to a 40S ribosomal subunit, followed by mRNA binding to form a 43S pre-initiation complex (43S PIC). Junction of the 60S ribosomal subunit to form the 80S initiation complex is preceded by hydrolysis of the GTP bound to eIF2 and release of an eIF2-GDP binary complex. In order for eIF2 to recycle and catalyze another round of initiation, the GDP bound to eIF2 must exchange with GTP by way of a reaction catalyzed by eIF2B. In Arabidopsis thaliana (Mouse-ear cress), this protein is Eukaryotic translation initiation factor 2 subunit beta.